A 299-amino-acid polypeptide reads, in one-letter code: Deoxyribonuclease-1-like 2 (299 aa).

Residues 1-20 (MGGPRALLAALWALEAAGTA) form the signal peptide. Residues glutamate 99 and histidine 170 contribute to the active site. The cysteines at positions 209 and 245 are disulfide-linked.

It belongs to the DNase I family. Mg(2+) serves as cofactor. Requires Ca(2+) as cofactor. As to expression, preferentially expressed in the skin and up-regulated during keratinocytes differentiation. Highly abundant (at protein level) in the stratum granulosum.

Its subcellular location is the cytoplasm. The protein resides in the secreted. Divalent cation-dependent acid DNA endonuclease involved in the breakdown of the nucleus during corneocyte formation of epidermal keratinocytes. May play an immune role by eliminating harmful DNA released into the extracellular environment by damaged epidermal cells. In Homo sapiens (Human), this protein is Deoxyribonuclease-1-like 2 (DNASE1L2).